The chain runs to 324 residues: NADH-cytochrome b5 reductase 2 (324 aa).

The helical transmembrane segment at 31–47 (IPLIGGITLAAGAGYYY) threads the bilayer. The FAD-binding FR-type domain maps to 70–178 (QGWIGLKLAH…KGPLPKYPWE (109 aa)). 181–216 (KHDHICLIAGGTGITPMYQLVRKIFSNPEDKTKVTL) is an FAD binding site.

It belongs to the flavoprotein pyridine nucleotide cytochrome reductase family. It depends on FAD as a cofactor.

It localises to the mitochondrion outer membrane. It catalyses the reaction 2 Fe(III)-[cytochrome b5] + NADH = 2 Fe(II)-[cytochrome b5] + NAD(+) + H(+). Functionally, may mediate the reduction of outer membrane cytochrome b5. This chain is NADH-cytochrome b5 reductase 2 (MCR1), found in Ajellomyces capsulatus (strain NAm1 / WU24) (Darling's disease fungus).